We begin with the raw amino-acid sequence, 313 residues long: Porphobilinogen deaminase (313 aa).

S-(dipyrrolylmethanemethyl)cysteine is present on cysteine 242.

Belongs to the HMBS family. Monomer. Dipyrromethane serves as cofactor.

It carries out the reaction 4 porphobilinogen + H2O = hydroxymethylbilane + 4 NH4(+). The protein operates within porphyrin-containing compound metabolism; protoporphyrin-IX biosynthesis; coproporphyrinogen-III from 5-aminolevulinate: step 2/4. Its function is as follows. Tetrapolymerization of the monopyrrole PBG into the hydroxymethylbilane pre-uroporphyrinogen in several discrete steps. The polypeptide is Porphobilinogen deaminase (Pseudomonas fluorescens (strain SBW25)).